Reading from the N-terminus, the 285-residue chain is Nucleotide-binding protein NTHI1314 (285 aa).

Residue 8-15 (GRSGAGKS) coordinates ATP. Residue 56-59 (DIRN) coordinates GTP.

Belongs to the RapZ-like family.

Displays ATPase and GTPase activities. The chain is Nucleotide-binding protein NTHI1314 from Haemophilus influenzae (strain 86-028NP).